The chain runs to 86 residues: Large ribosomal subunit protein bL31B (86 aa).

Belongs to the bacterial ribosomal protein bL31 family. Type B subfamily. In terms of assembly, part of the 50S ribosomal subunit.

This is Large ribosomal subunit protein bL31B from Streptococcus agalactiae serotype Ia (strain ATCC 27591 / A909 / CDC SS700).